The primary structure comprises 357 residues: MSPSPFAPTIETIDYPFPPKPIPLSDAEKADYKARIKQLLIEKDAVLVAHYYTDPEIQALAEETGGCVSDSLEMARFGRDHPAKTLIVAGVKFMGETAKILSPEKTILMPTLEATCSLDLGCPIDKFSAFCDAHPDHTVVVYANTSAAVKARADWVVTSSIALEIVEHLDSEGKKIIWGPDRHLGSYIAKQTGAEMLMWQGDCIVHDEFKANALRDLKRVYPDAAILVHPESPASVVAMADAVGSTSQLIKAAQTMANERFIVATDRGIFYKMQQAAPGKTLIEAPTGGNGATCKSCAHCPWMAMNGLKAIEASLSDSDKTTHEIFVDEDLRVKALIPLTRMLDFAKTLNMKVKGNA.

Residues His-50 and Ser-71 each coordinate iminosuccinate. Cys-116 lines the [4Fe-4S] cluster pocket. Residues Tyr-142–Asn-144 and Ser-159 contribute to the iminosuccinate site. Cys-203 lines the [4Fe-4S] cluster pocket. Iminosuccinate is bound by residues His-229–Glu-231 and Thr-246. Position 300 (Cys-300) interacts with [4Fe-4S] cluster.

Belongs to the quinolinate synthase family. Type 1 subfamily. Requires [4Fe-4S] cluster as cofactor.

The protein localises to the cytoplasm. It catalyses the reaction iminosuccinate + dihydroxyacetone phosphate = quinolinate + phosphate + 2 H2O + H(+). Its pathway is cofactor biosynthesis; NAD(+) biosynthesis; quinolinate from iminoaspartate: step 1/1. Its function is as follows. Catalyzes the condensation of iminoaspartate with dihydroxyacetone phosphate to form quinolinate. This chain is Quinolinate synthase, found in Shewanella sp. (strain MR-4).